A 244-amino-acid chain; its full sequence is Mitophagy receptor atg43 (244 aa).

Residues 1–24 (MSSESKGIPIPRSDSNKTSDVSSW) are disordered. The Cytoplasmic segment spans residues 1–198 (MSSESKGIPI…LVALITLRDH (198 aa)). Positions 28–31 (YELI) match the atg8 interacting motif (AIM) motif. Residues 105–131 (SLSLLQSKEEDDSSNWETEDSESAVEE) form a disordered region. Residues 113-131 (EEDDSSNWETEDSESAVEE) are compositionally biased toward acidic residues. Positions 165–184 (PPIPDLRFQQSYLQSIQRAN) are involved in MIM complex binding. Required for normal vegetative cell population growth but is dispensable for mitophagy. The chain crosses the membrane as a helical span at residues 199-215 (VLYPFLSGGMWVFVRHI). Residues 216–244 (FQFLKLQEKGFHFGQSLRRNLGLFSTFKD) lie on the Mitochondrial intermembrane side of the membrane.

In terms of assembly, interacts (via N-terminal atg8 interacting motif) with atg8; the interaction is direct. Interacts with the mitochondrial outer import machinery (MIM) complex subunits mim1 and mim2.

It is found in the mitochondrion outer membrane. Its function is as follows. Mitophagy receptor that tethers atg8 to the mitochondrial outer membrane to promote selective autophagy. The chain is Mitophagy receptor atg43 from Schizosaccharomyces pombe (strain 972 / ATCC 24843) (Fission yeast).